A 325-amino-acid chain; its full sequence is MVFASLEHILTHISFSVVSILISIHLITLLFVKEIIGLSDSSKKGMIITFFCITGLLVTRWVFSGHLPFSDLYESLIFLSWTFSIFYMVPYFKKSKNYYLNTIITPSVIFTQGFATSGLLTKMHESLILVPALQSHWLMMHVSMMILGYATLLCGSLLSVAILVITFQELIQIIGKSKNFYFLNESFSFAEIKYMNMTDKNNVLQKTSFLSYRNYYRSQFLQQLDRWGYRTISLGFIFLTIGIISGAVWANEAWGSYWNWDPKETWAFITWTIFAIYLHTRKNKKLEDLNSSIVASIGFLIIWVCYLGINLLGIGLHSYGSFTPN.

The next 8 membrane-spanning stretches (helical) occupy residues 12 to 32 (HISFSVVSILISIHLITLLFV), 45 to 65 (GMIITFFCITGLLVTRWVFSG), 72 to 92 (LYESLIFLSWTFSIFYMVPYF), 100 to 120 (LNTIITPSVIFTQGFATSGLL), 145 to 165 (MILGYATLLCGSLLSVAILVI), 231 to 251 (TISLGFIFLTIGIISGAVWAN), 264 to 281 (ETWAFITWTIFAIYLHTR), and 293 to 313 (IVASIGFLIIWVCYLGINLLG).

It belongs to the CcmF/CycK/Ccl1/NrfE/CcsA family. In terms of assembly, may interact with Ccs1.

The protein localises to the plastid. The protein resides in the chloroplast thylakoid membrane. Its function is as follows. Required during biogenesis of c-type cytochromes (cytochrome c6 and cytochrome f) at the step of heme attachment. In Glycine max (Soybean), this protein is Cytochrome c biogenesis protein CcsA.